Reading from the N-terminus, the 921-residue chain is Probable TonB-dependent receptor NMB1497 (921 aa).

The N-terminal stretch at 1–25 (MRSSFRLKPICFYLMGVTLYHYSYA) is a signal peptide. In terms of domain architecture, TBDR plug spans 53-174 (DKKVFTDARA…LAGSANLRTL (122 aa)). One can recognise a TBDR beta-barrel domain in the interval 185-921 (TYGLLLKGLT…TFLMTMSYKF (737 aa)). Positions 904-921 (LTNFARGRTFLMTMSYKF) match the TonB C-terminal box motif.

Belongs to the TonB-dependent receptor family.

Its subcellular location is the cell outer membrane. Its function is as follows. Probable receptor, TonB-dependent. In Neisseria meningitidis serogroup B (strain ATCC BAA-335 / MC58), this protein is Probable TonB-dependent receptor NMB1497.